The sequence spans 491 residues: Ubiquitin carboxyl-terminal hydrolase 30 (491 aa).

At 1–31 (MPWCKQGTTDKLVREFLRTGAAARNKMMKNW) the chain is on the mitochondrial intermembrane side. Residues 32–52 (GVIGGIAAAMAAGVYVLWGPI) form a helical membrane-spanning segment. Residues 53 to 491 (SDRRKKRKGM…MQRPGLRVEE (439 aa)) are Cytoplasmic-facing. The USP domain occupies 64–482 (PGLLNLGNTC…SAYLLFYERM (419 aa)). C73 functions as the Nucleophile in the catalytic mechanism. A compositionally biased stretch (polar residues) spans 346-355 (AQSQQKTSRT). A disordered region spans residues 346–365 (AQSQQKTSRTNKAKASADPK). The active-site Proton acceptor is the H432.

This sequence belongs to the peptidase C19 family.

The protein localises to the mitochondrion outer membrane. The enzyme catalyses Thiol-dependent hydrolysis of ester, thioester, amide, peptide and isopeptide bonds formed by the C-terminal Gly of ubiquitin (a 76-residue protein attached to proteins as an intracellular targeting signal).. Deubiquitinating enzyme that acts as a key inhibitor of mitophagy by counteracting the action of parkin (PRKN). The sequence is that of Ubiquitin carboxyl-terminal hydrolase 30 (usp30) from Danio rerio (Zebrafish).